We begin with the raw amino-acid sequence, 362 residues long: Molybdenum import ATP-binding protein ModC (362 aa).

An ABC transporter domain is found at 2–236; that stretch reads VSPIEVRLQM…LDLPLAMGDD (235 aa). Position 34–41 (34–41) interacts with ATP; that stretch reads GPSGSGKT. The region spanning 297–362 is the Mop domain; that stretch reads HSSILNRLPV…AQIKAVAVLA (66 aa).

This sequence belongs to the ABC transporter superfamily. Molybdate importer (TC 3.A.1.8) family. In terms of assembly, the complex is composed of two ATP-binding proteins (ModC), two transmembrane proteins (ModB) and a solute-binding protein (ModA).

Its subcellular location is the cell inner membrane. The catalysed reaction is molybdate(out) + ATP + H2O = molybdate(in) + ADP + phosphate + H(+). Part of the ABC transporter complex ModABC involved in molybdenum import. Responsible for energy coupling to the transport system. The sequence is that of Molybdenum import ATP-binding protein ModC from Pseudomonas syringae pv. tomato (strain ATCC BAA-871 / DC3000).